Here is a 450-residue protein sequence, read N- to C-terminus: 3',5'-cyclic-AMP phosphodiesterase 7B (450 aa).

The PDEase domain maps to 97-420; the sequence is LDEDYLGQAR…AQWKSLLPRQ (324 aa). Catalysis depends on His173, which acts as the Proton donor. Residues His177, His213, Asp214, and Asp323 each coordinate a divalent metal cation. The segment at 418–450 is disordered; the sequence is PRQHRSRGSSGSGPDHDHAGQGTESEEQEGDSP. Residue Ser426 is modified to Phosphoserine. The span at 441-450 shows a compositional bias: acidic residues; that stretch reads ESEEQEGDSP.

The protein belongs to the cyclic nucleotide phosphodiesterase family. PDE7 subfamily. A divalent metal cation serves as cofactor. Highly expressed in brain. Also expressed in heart, liver, skeletal muscle and pancreas.

The catalysed reaction is 3',5'-cyclic AMP + H2O = AMP + H(+). It functions in the pathway purine metabolism; 3',5'-cyclic AMP degradation; AMP from 3',5'-cyclic AMP: step 1/1. Its activity is regulated as follows. Inhibited by dipyridamole, IBMX and SCH 51866. Insensitive to zaprinast, rolipram, and milrinone. In terms of biological role, hydrolyzes the second messenger cAMP, which is a key regulator of many important physiological processes. May be involved in the control of cAMP-mediated neural activity and cAMP metabolism in the brain. The protein is 3',5'-cyclic-AMP phosphodiesterase 7B of Homo sapiens (Human).